Here is a 290-residue protein sequence, read N- to C-terminus: Cilia- and flagella-associated protein 298 (290 aa).

It belongs to the CFAP298 family. As to quaternary structure, interacts with ZMYND10. Expressed in the trachea (at protein level).

Its subcellular location is the cytoplasm. The protein localises to the cytoskeleton. It localises to the cilium basal body. Its function is as follows. Plays a role in motile cilium function, possibly by acting on outer dynein arm assembly. Seems to be important for initiation rather than maintenance of cilium motility. Required for correct positioning of cilia at the apical cell surface, suggesting an additional role in the planar cell polarity (PCP) pathway. May suppress canonical Wnt signaling activity. The sequence is that of Cilia- and flagella-associated protein 298 from Rattus norvegicus (Rat).